A 475-amino-acid polypeptide reads, in one-letter code: Peripherin (475 aa).

Residues 1 to 42 are disordered; it reads MPSSASMSHHHSSGLRSSISSTSYRRTFGPPPSLSPGAFSYS. A head region spans residues 1–103; that stretch reads MPSSASMSHH…FLATRSNEKQ (103 aa). Positions 14 to 26 are enriched in low complexity; that stretch reads GLRSSISSTSYRR. A 3'-nitrotyrosine modification is found at Y24. 2 positions are modified to phosphoserine: S35 and S57. S66 carries the phosphoserine; by PKB/AKT1 modification. An IF rod domain is found at 101-411; that stretch reads EKQELQELND…KLLEGEESRI (311 aa). The tract at residues 104–136 is coil 1A; it reads ELQELNDRFANFIEKVRFLEQQNAALRGELSQA. The segment at 137–147 is linker 1; sequence RGQEPARADQL. A coil 1B region spans residues 148 to 243; that stretch reads CQQELRELRR…KLHEEELRDL (96 aa). The interval 244–266 is linker 2; it reads QVSVESQQVQQVEVEATVKPELT. Positions 267 to 409 are coil 2; sequence AALRDIRAQY…YRKLLEGEES (143 aa). 3'-nitrotyrosine is present on Y383. The tail stretch occupies residues 410 to 475; it reads RISVPVHSFA…DLDKSSIHSY (66 aa). The segment at 453 to 475 is disordered; that stretch reads EKVVTESQKEQHSDLDKSSIHSY. At Y475 the chain carries Phosphotyrosine.

It belongs to the intermediate filament family. In terms of assembly, forms homodimers (in vitro). Homopolymerizes into a filamentous network (in vitro). Forms heterodimers with NEFL, NEFM or NEFH (in vitro). Interacts with DST (via C-terminus). Interacts with RAB7A; the interaction is direct. Interacts with PRKCE (via phorbol-ester/DAG-type 2 domain). In terms of processing, phosphorylated; phosphorylation increases after nerve injury in regenerating neurons. In terms of tissue distribution, expressed in the sciatic nerve and at very low levels in the central nervous system (at protein level). Expressed in the spinal cord, in the sciatic nerve at the level of the dorsal root ganglion and in trigeminal nerves (at protein level). Expressed in the cranial nerves in the hindbrain, including the sensory and motor trigeminal neurons, the mesencephalic trigeminal neurons, the spinal trigeminal neurons, and in the facial nerve (at protein level). Expressed in the cerebellum, with expression in the inferior cerebellar peduncle and the lateral deep cerebellar nucleus (at protein level). Expressed in vestibulocochlear neurons, such as the anteroventral cochlear nucleus, the dorsal cochlear nucleus, the superficial granule cell layer and the granule cell lamina (at protein level). Expressed in glossopharyngeal, vagal and hypoglossal neurons (at protein level). Expressed in peripheral sensory neurons, in the dorsal root ganglia and the spinal cord, and to a lower extent in motor neurons. Expressed in the optic tract of the central nervous system, especially in the lateral geniculate nucleus and the superior colliculus. Expressed in neurons of the pineal stalk in the cortex. Expressed in the spinal trigeminal tract of the midbrain, in the medulla and in the medial cerebellar peduncle.

The protein resides in the cytoplasm. It localises to the cytoskeleton. The protein localises to the cell projection. It is found in the axon. Its subcellular location is the perikaryon. Class-III neuronal intermediate filament protein. May form an independent structural network without the involvement of other neurofilaments or may cooperate with the neuronal intermediate filament proteins NEFL, NEFH, NEFM and INA to form filamentous networks. Assembly of the neuronal intermediate filaments may be regulated by RAB7A. Plays a role in the development of unmyelinated sensory neurons. May be involved in axon elongation and axon regeneration after injury. Inhibits neurite extension in type II spiral ganglion neurons in the cochlea. In Mus musculus (Mouse), this protein is Peripherin (Prph).